A 368-amino-acid chain; its full sequence is Glycolate oxidase 2 (368 aa).

The 360-residue stretch at 1-360 folds into the FMN hydroxy acid dehydrogenase domain; sequence MALVTNVCEY…TRGHVVTESD (360 aa). Residues 78–80, Ser107, 128–130, and Thr156 each bind FMN; these read PTA and QLS. Arg165 provides a ligand contact to glyoxylate. FMN-binding residues include Lys231 and Ser253. Residues His255 and Arg258 each coordinate glyoxylate. The Proton acceptor role is filled by His255. Residues 286–290 and 309–310 each bind FMN; these read DSGFR and GR. The short motif at 366–368 is the Microbody targeting signal element; that stretch reads SRL.

It belongs to the FMN-dependent alpha-hydroxy acid dehydrogenase family. In terms of assembly, homotetramer. It depends on FMN as a cofactor.

It localises to the peroxisome. It carries out the reaction glycolate + O2 = glyoxylate + H2O2. It functions in the pathway photosynthesis; photorespiration; glycine from 2-phosphoglycolate: step 2/3. In terms of biological role, catalyzes the oxidation of glycolate to glyoxylate, with a reduction of O2 to H2O2. Is a key enzyme in photorespiration in green plants. In Oryza sativa subsp. indica (Rice), this protein is Glycolate oxidase 2 (GLO2).